A 331-amino-acid polypeptide reads, in one-letter code: UBX domain-containing protein 2B (331 aa).

2 stretches are compositionally biased toward basic and acidic residues: residues M1–S16 and D37–R48. The segment at M1 to K70 is disordered. A2 carries the post-translational modification N-acetylalanine. S56 carries the post-translational modification Phosphoserine. T59 is modified (phosphothreonine). S66 carries the post-translational modification Phosphoserine. The region spanning D141–I206 is the SEP domain. 3 positions are modified to phosphoserine: S231, S234, and S235. In terms of domain architecture, UBX spans D252–Q329.

It belongs to the NSFL1C family. Interacts with VCP. Does not bind ubiquitin.

Its subcellular location is the nucleus. It is found in the cytoplasm. It localises to the cytosol. The protein resides in the endoplasmic reticulum. The protein localises to the golgi apparatus. Its subcellular location is the cytoskeleton. It is found in the microtubule organizing center. It localises to the centrosome. Adapter protein required for Golgi and endoplasmic reticulum biogenesis. Involved in Golgi and endoplasmic reticulum maintenance during interphase and in their reassembly at the end of mitosis. The complex formed with VCP has membrane fusion activity; membrane fusion activity requires USO1-GOLGA2 tethering and BET1L. VCPIP1 is also required, but not its deubiquitinating activity. Together with NSFL1C/p47, regulates the centrosomal levels of kinase AURKA/Aurora A during mitotic progression by promoting AURKA removal from centrosomes in prophase. Also, regulates spindle orientation during mitosis. The chain is UBX domain-containing protein 2B (Ubxn2b) from Mus musculus (Mouse).